A 99-amino-acid chain; its full sequence is Gibberellin-regulated protein 2 (99 aa).

The N-terminal stretch at Met1–Ala26 is a signal peptide.

The protein belongs to the GASA family. In terms of processing, six disulfide bonds may be present. In terms of tissue distribution, dry seeds and maturating siliques.

The protein resides in the secreted. Its function is as follows. Gibberellin-regulated protein that may function in hormonal controlled steps of development such as seed germination, flowering and seed maturation. This Arabidopsis thaliana (Mouse-ear cress) protein is Gibberellin-regulated protein 2 (GASA2).